The primary structure comprises 322 residues: MYTCSIIIYILTFWQLSKIKKQVAAAEKQVMTVTEKQEAVAEFYDKSTDAWEVFFGEHLHDGFYEPGTTATIPGSKVAVVRMIDELLRFAGISDDPEKKPKTMLDVGCGLGGTCLHVAKKYDIKCTGITISPEQVKCAQDLAATQGLESKVSFDVGDALDMPYKDGTFDLVFTIQCIEHIQDKEKFIREMVRVAAPGAPVVIAGYAARNLSPSEESLKPEEKMVLEKICDHIVLSWLCSTGDYVKWLTPLPVQDIKVWDLTQNITPFYPLCIKEAFTWKSFTSLLKMGGWSAIKVVFAVKMMAMAAEEGLLKFAAVTCRKSK.

The SAM motif I stretch occupies residues 103 to 112 (MLDVGCGLGG). The interval 166-174 (GTFDLVFTI) is SAM motif II. The tract at residues 193–202 (VAAPGAPVVI) is SAM motif III.

It belongs to the class I-like SAM-binding methyltransferase superfamily. gTMT family. As to quaternary structure, homodimer. In terms of tissue distribution, accumulates in tissues actively synthesizing monoterpenoid indole alkaloids (MIAs) (at protein level). Mainly expressed in young leaves, but barely in roots and stems.

It localises to the cytoplasm. The protein resides in the cytosol. It carries out the reaction picrinine + S-adenosyl-L-methionine = ervincine + S-adenosyl-L-homocysteine + H(+). The protein operates within alkaloid biosynthesis; vindoline biosynthesis. S-adenosyl-L-methionine-dependent N-methyltransferase involved in the biosynthesis of biologically active monoterpenoid indole alkaloids (MIAs) natural products including vindoline. Catalyzes the conversion of picrinine to N-methylpicrinine (ervincine). Also accepts, with low efficiency, 21-hydroxycyclolochnericine and norajmaline as substrates. The polypeptide is Picrinine-N-methytransferase (Vinca minor (Common periwinkle)).